The sequence spans 51 residues: Large ribosomal subunit protein bL33 (51 aa).

The protein belongs to the bacterial ribosomal protein bL33 family.

This chain is Large ribosomal subunit protein bL33, found in Alkalilimnicola ehrlichii (strain ATCC BAA-1101 / DSM 17681 / MLHE-1).